We begin with the raw amino-acid sequence, 77 residues long: VpAmp2.0 (77 aa).

Residues 1–23 (MQLRKALLVIFVAYLLVTDEAEA) form the signal peptide. Residues 49 to 77 (RKREIEDLFDPYQKDLDLQRLDRFFSQFQ) constitute a propeptide that is removed on maturation.

It belongs to the non-disulfide-bridged peptide (NDBP) superfamily. Medium-length antimicrobial peptide (group 3) family. In terms of tissue distribution, expressed by the venom gland.

The protein localises to the secreted. It is found in the target cell membrane. Functionally, antimicrobial peptide with potent activity against Gram-positive bacteria S.aureus (MIC=10 uM) and S.agalactiaea (MIC=15 uM), and Gram-negative bacteria E.coli (MIC=24 uM) and P.aeruginosa (MIC=15 uM), as well as against yeasts Candida albicans (MIC=3.1 uM) and C.glabrata (MIC=25 uM). Also elicits low hemolysis on human erythrocytes (HC(50)=167 uM). This Mesomexovis punctatus (Scorpion) protein is VpAmp2.0.